A 433-amino-acid chain; its full sequence is Divergent protein kinase domain 2B (433 aa).

The N-terminal stretch at 1 to 29 is a signal peptide; it reads MEPRLGPKAAALHLGWPFLLLWVSGLSYS. A glycan (N-linked (GlcNAc...) asparagine) is linked at asparagine 100.

This sequence belongs to the DIPK family.

The protein resides in the secreted. This chain is Divergent protein kinase domain 2B (DIPK2B), found in Bos taurus (Bovine).